Reading from the N-terminus, the 267-residue chain is L-aspartate dehydrogenase (267 aa).

Residues Ala-124 and Asn-190 each coordinate NAD(+). His-218 is an active-site residue.

This sequence belongs to the L-aspartate dehydrogenase family.

The catalysed reaction is L-aspartate + NADP(+) + H2O = oxaloacetate + NH4(+) + NADPH + H(+). It carries out the reaction L-aspartate + NAD(+) + H2O = oxaloacetate + NH4(+) + NADH + H(+). The protein operates within cofactor biosynthesis; NAD(+) biosynthesis; iminoaspartate from L-aspartate (dehydrogenase route): step 1/1. In terms of biological role, specifically catalyzes the NAD or NADP-dependent dehydrogenation of L-aspartate to iminoaspartate. The polypeptide is L-aspartate dehydrogenase (Methanococcus maripaludis (strain C6 / ATCC BAA-1332)).